Here is a 107-residue protein sequence, read N- to C-terminus: MVNFNQFLKQAQSMQKKMQEAQEQMANTRYTGKAGGMLVEIIITGKGEIEKVSIDESLLKIEEKEILEDLIKVAFNDAKQKCDEDSQNSLSGALNGMSLPPGFKIPF.

The protein belongs to the YbaB/EbfC family. In terms of assembly, homodimer.

The protein localises to the cytoplasm. It is found in the nucleoid. Its function is as follows. Binds to DNA and alters its conformation. May be involved in regulation of gene expression, nucleoid organization and DNA protection. This is Nucleoid-associated protein RT0857 from Rickettsia typhi (strain ATCC VR-144 / Wilmington).